A 423-amino-acid chain; its full sequence is Putative competence-damage inducible protein (423 aa).

Belongs to the CinA family.

The polypeptide is Putative competence-damage inducible protein (Streptococcus pyogenes serotype M1).